A 272-amino-acid chain; its full sequence is Dermonecrotic toxin LspaSicTox-alphaII1 (272 aa).

Histidine 5 is a catalytic residue. 2 residues coordinate Mg(2+): glutamate 25 and aspartate 27. Histidine 41 serves as the catalytic Nucleophile. 2 cysteine pairs are disulfide-bonded: cysteine 45-cysteine 51 and cysteine 47-cysteine 190. Aspartate 85 serves as a coordination point for Mg(2+).

It belongs to the arthropod phospholipase D family. Class II subfamily. It depends on Mg(2+) as a cofactor. As to expression, expressed by the venom gland.

It localises to the secreted. It catalyses the reaction an N-(acyl)-sphingosylphosphocholine = an N-(acyl)-sphingosyl-1,3-cyclic phosphate + choline. The catalysed reaction is an N-(acyl)-sphingosylphosphoethanolamine = an N-(acyl)-sphingosyl-1,3-cyclic phosphate + ethanolamine. It carries out the reaction a 1-acyl-sn-glycero-3-phosphocholine = a 1-acyl-sn-glycero-2,3-cyclic phosphate + choline. The enzyme catalyses a 1-acyl-sn-glycero-3-phosphoethanolamine = a 1-acyl-sn-glycero-2,3-cyclic phosphate + ethanolamine. Dermonecrotic toxins cleave the phosphodiester linkage between the phosphate and headgroup of certain phospholipids (sphingolipid and lysolipid substrates), forming an alcohol (often choline) and a cyclic phosphate. This toxin acts on sphingomyelin (SM). It may also act on ceramide phosphoethanolamine (CPE), lysophosphatidylcholine (LPC) and lysophosphatidylethanolamine (LPE), but not on lysophosphatidylserine (LPS), and lysophosphatidylglycerol (LPG). It acts by transphosphatidylation, releasing exclusively cyclic phosphate products as second products. Induces dermonecrosis, hemolysis, increased vascular permeability, edema, inflammatory response, and platelet aggregation. This is Dermonecrotic toxin LspaSicTox-alphaII1 from Loxosceles spadicea (Recluse spider).